We begin with the raw amino-acid sequence, 180 residues long: Acireductone dioxygenase 1 (180 aa).

Histidine 82, histidine 84, glutamate 88, and histidine 127 together coordinate Fe(2+). Ni(2+) contacts are provided by histidine 82, histidine 84, glutamate 88, and histidine 127.

Belongs to the acireductone dioxygenase (ARD) family. Fe(2+) is required as a cofactor. Requires Ni(2+) as cofactor.

The protein localises to the cytoplasm. The protein resides in the nucleus. The enzyme catalyses 1,2-dihydroxy-5-(methylsulfanyl)pent-1-en-3-one + O2 = 4-methylsulfanyl-2-oxobutanoate + formate + 2 H(+). It carries out the reaction 1,2-dihydroxy-5-(methylsulfanyl)pent-1-en-3-one + O2 = 3-(methylsulfanyl)propanoate + CO + formate + 2 H(+). The protein operates within amino-acid biosynthesis; L-methionine biosynthesis via salvage pathway; L-methionine from S-methyl-5-thio-alpha-D-ribose 1-phosphate: step 5/6. Its function is as follows. Catalyzes 2 different reactions between oxygen and the acireductone 1,2-dihydroxy-3-keto-5-methylthiopentene (DHK-MTPene) depending upon the metal bound in the active site. Fe-containing acireductone dioxygenase (Fe-ARD) produces formate and 2-keto-4-methylthiobutyrate (KMTB), the alpha-ketoacid precursor of methionine in the methionine recycle pathway. Ni-containing acireductone dioxygenase (Ni-ARD) produces methylthiopropionate, carbon monoxide and formate, and does not lie on the methionine recycle pathway. This chain is Acireductone dioxygenase 1, found in Sorghum bicolor (Sorghum).